The sequence spans 444 residues: Multidrug resistance protein MdtA (444 aa).

An N-terminal signal peptide occupies residues 1 to 20 (MKSQSKRTSRLFVFVGGVVA). The segment covering 37-52 (NNTSGAQQSARGQDTS) has biased composition (polar residues). 2 disordered regions span residues 37–60 (NNTSGAQQSARGQDTSHGGRRNTP) and 398–444 (TPRS…AEKS). The span at 406 to 419 (ANPASAEKAAAEAE) shows a compositional bias: low complexity. The segment covering 435-444 (ARSTTAAEKS) has biased composition (polar residues).

Belongs to the membrane fusion protein (MFP) (TC 8.A.1) family. Part of a tripartite efflux system composed of MdtA, MdtB and MdtC.

The protein localises to the cell inner membrane. The protein is Multidrug resistance protein MdtA of Yersinia pseudotuberculosis serotype O:1b (strain IP 31758).